A 1368-amino-acid polypeptide reads, in one-letter code: DNA-directed RNA polymerase subunit beta (1368 aa).

The protein belongs to the RNA polymerase beta chain family. In terms of assembly, the RNAP catalytic core consists of 2 alpha, 1 beta, 1 beta' and 1 omega subunit. When a sigma factor is associated with the core the holoenzyme is formed, which can initiate transcription.

It catalyses the reaction RNA(n) + a ribonucleoside 5'-triphosphate = RNA(n+1) + diphosphate. In terms of biological role, DNA-dependent RNA polymerase catalyzes the transcription of DNA into RNA using the four ribonucleoside triphosphates as substrates. This Burkholderia ambifaria (strain ATCC BAA-244 / DSM 16087 / CCUG 44356 / LMG 19182 / AMMD) (Burkholderia cepacia (strain AMMD)) protein is DNA-directed RNA polymerase subunit beta.